We begin with the raw amino-acid sequence, 561 residues long: Laccase-1 (561 aa).

The N-terminal stretch at methionine 1–alanine 20 is a signal peptide. Plastocyanin-like domains lie at valine 68–threonine 185 and aspartate 191–serine 337. N-linked (GlcNAc...) asparagine glycosylation is found at asparagine 71, asparagine 87, and asparagine 114. Positions 119, 121, 163, and 165 each coordinate Cu cation. Cysteines 140 and 542 form a disulfide. Residues asparagine 226, asparagine 284, asparagine 327, asparagine 391, and asparagine 398 are each glycosylated (N-linked (GlcNAc...) asparagine). Residues leucine 396 to serine 525 enclose the Plastocyanin-like 3 domain. Cu cation is bound by residues histidine 445, histidine 448, histidine 450, histidine 504, cysteine 505, histidine 506, and histidine 510.

Belongs to the multicopper oxidase family. Cu cation serves as cofactor.

The protein localises to the secreted. The catalysed reaction is 4 hydroquinone + O2 = 4 benzosemiquinone + 2 H2O. Functionally, lignin degradation and detoxification of lignin-derived products. This Botryotinia fuckeliana (Noble rot fungus) protein is Laccase-1 (lcc1).